We begin with the raw amino-acid sequence, 341 residues long: Malate dehydrogenase 1, mitochondrial (341 aa).

The N-terminal 22 residues, 1–22 (MFRSMLVRSSASAKQAVIRRSF), are a transit peptide targeting the mitochondrion. NAD(+) is bound by residues 36–42 (GAAGGIG) and Asp-62. 2 residues coordinate substrate: Arg-109 and Arg-115. NAD(+)-binding positions include Asn-122 and 145 to 147 (ISN). Substrate is bound by residues Asn-147 and Arg-181. The active-site Proton acceptor is the His-205. Met-256 is a binding site for NAD(+).

The protein belongs to the LDH/MDH superfamily. MDH type 1 family. As to quaternary structure, homodimer. Post-translationally, forms intramolecular disulfide bonds. As to expression, expressed in rosette leaves.

The protein resides in the mitochondrion matrix. It catalyses the reaction (S)-malate + NAD(+) = oxaloacetate + NADH + H(+). Negatively regulated by ATP. Not redox-regulated. The formation of intramolecular disulfide bonds does not alter enzymatic activity. Catalyzes a reversible NAD-dependent dehydrogenase reaction involved in central metabolism and redox homeostasis between organelle compartments. Required for carbon dioxide and energy partitioning in leaves. May limit photorespiration during the dark phase. Its activity is essential to shuttle reductants out from the mitochondria to support the photorespiratory flux. Can convert 2-oxoglutarate to (S)-2-hydroxyglutarate in vitro. The sequence is that of Malate dehydrogenase 1, mitochondrial from Arabidopsis thaliana (Mouse-ear cress).